Consider the following 319-residue polypeptide: Lambda-crystallin homolog (319 aa).

An N-acetylalanine modification is found at alanine 2. Position 3 is a phosphoserine (serine 3). NAD(+)-binding positions include 16–17 (VI), aspartate 36, glutamate 97, and lysine 102. Phosphoserine is present on serine 111.

Belongs to the 3-hydroxyacyl-CoA dehydrogenase family. As to quaternary structure, homodimer. As to expression, widely expressed, with highest levels in liver and kidney.

The protein resides in the cytoplasm. The catalysed reaction is L-gulonate + NAD(+) = 3-dehydro-L-gulonate + NADH + H(+). Its activity is regulated as follows. Inhibited by malonate. Has high L-gulonate 3-dehydrogenase activity. It also exhibits low dehydrogenase activity toward L-3-hydroxybutyrate (HBA) and L-threonate. The polypeptide is Lambda-crystallin homolog (CRYL1) (Homo sapiens (Human)).